A 79-amino-acid chain; its full sequence is Large ribosomal subunit protein bL31 (79 aa).

Zn(2+) contacts are provided by C16, C18, C37, and C40.

The protein belongs to the bacterial ribosomal protein bL31 family. Type A subfamily. In terms of assembly, part of the 50S ribosomal subunit. Zn(2+) is required as a cofactor.

Functionally, binds the 23S rRNA. The chain is Large ribosomal subunit protein bL31 from Coxiella burnetii (strain CbuG_Q212) (Coxiella burnetii (strain Q212)).